A 106-amino-acid chain; its full sequence is Tripartite terminase subunit 2 (106 aa).

It belongs to the herpesviridae TRM2 protein family. Associates with TRM1 and TRM3 to form the tripartite terminase complex.

It localises to the host nucleus. In terms of biological role, component of the molecular motor that translocates viral genomic DNA in empty capsid during DNA packaging. Forms a tripartite terminase complex together with TRM1 and TRM3 in the host cytoplasm. Once the complex reaches the host nucleus, it interacts with the capsid portal vertex. This portal forms a ring in which genomic DNA is translocated into the capsid. In Human herpesvirus 6A (strain Uganda-1102) (HHV-6 variant A), this protein is Tripartite terminase subunit 2.